The primary structure comprises 134 residues: Putative transposase InsN for insertion sequence element IS911A (134 aa).

Belongs to the transposase 8 family.

Its function is as follows. Involved in the transposition of the insertion sequence IS911. The sequence is that of Putative transposase InsN for insertion sequence element IS911A (insN1) from Escherichia coli (strain K12).